Reading from the N-terminus, the 655-residue chain is MGIFSIANQHIRFAVKLATAIVLALFVGFHFQLETPRWAVLTAAIVAAGPAFAAGGEPYSGAIRYRGFLRIIGTFIGCIAGLVIIIAMIRAPLLMILVCCIWAGFCTWISSLVRIENSYAWGLAGYTALIIVITIQPEPLLTPQFAVERCSEIVIGIVCAIMADLLFSPRSIKQEVDRELESLLVAQYQLMQLCIKHGDGEVVDKAWGDLVRRTTALQGMRSNLNMESSRWARANRRLKAINTLSLTLITQSCETYLIQNTRPELITDTFREFFDTPVETAQDVHKQLKRLRRVIAWTGERETPVTIYSWVAAATRYQLLKRGVISNTKINATEEEILQGEPEVKVESAERHHAMVNFWRTTLSCILGTLFWLWTGWTSGSGAMVMIAVVTSLAMRLPNPRMVAIDFIYGTLAALPLGLLYFLVIIPNTQQSMLLLCISLAVLGFFLGIEVQKRRLGSMGALASTINIIVLDNPMTFHFSQFLDSALGQIVGCVLAFTVILLVRDKSRDRTGRVLLNQFVSAAVSAMTTNVARRKENHLPALYQQLFLLMNKFPGDLPKFRLALTMIIAHQRLRDAPIPVNEDLSAFHRQMRRTADHVISARSDDKRRRYFGQLLEELEIDQEKLRIWQAPPQVTEPVHRLTGMLHKYQHALTDS.

Residues 1–12 (MGIFSIANQHIR) lie on the Periplasmic side of the membrane. Residues 13 to 33 (FAVKLATAIVLALFVGFHFQL) traverse the membrane as a helical segment. The Cytoplasmic portion of the chain corresponds to 34–37 (ETPR). A helical transmembrane segment spans residues 38-58 (WAVLTAAIVAAGPAFAAGGEP). At 59-68 (YSGAIRYRGF) the chain is on the periplasmic side. The helical transmembrane segment at 69–89 (LRIIGTFIGCIAGLVIIIAMI) threads the bilayer. Over 90 to 92 (RAP) the chain is Cytoplasmic. Residues 93 to 113 (LLMILVCCIWAGFCTWISSLV) form a helical membrane-spanning segment. Residues 114 to 120 (RIENSYA) lie on the Periplasmic side of the membrane. A helical membrane pass occupies residues 121–141 (WGLAGYTALIIVITIQPEPLL). Over 142–151 (TPQFAVERCS) the chain is Cytoplasmic. Residues 152–172 (EIVIGIVCAIMADLLFSPRSI) traverse the membrane as a helical segment. Residues 173–369 (KQEVDRELES…RTTLSCILGT (197 aa)) are Periplasmic-facing. Residues 370 to 390 (LFWLWTGWTSGSGAMVMIAVV) traverse the membrane as a helical segment. Over 391–406 (TSLAMRLPNPRMVAID) the chain is Cytoplasmic. The chain crosses the membrane as a helical span at residues 407–427 (FIYGTLAALPLGLLYFLVIIP). Residues 428 to 430 (NTQ) are Periplasmic-facing. The chain crosses the membrane as a helical span at residues 431–451 (QSMLLLCISLAVLGFFLGIEV). Over 452–458 (QKRRLGS) the chain is Cytoplasmic. Residues 459–479 (MGALASTINIIVLDNPMTFHF) traverse the membrane as a helical segment. The Periplasmic segment spans residues 480–481 (SQ). A helical transmembrane segment spans residues 482 to 502 (FLDSALGQIVGCVLAFTVILL). The Cytoplasmic segment spans residues 503 to 655 (VRDKSRDRTG…HKYQHALTDS (153 aa)).

The protein belongs to the aromatic acid exporter ArAE (TC 2.A.85) family.

The protein localises to the cell inner membrane. Functionally, forms an efflux pump with AaeA. Could function as a metabolic relief valve, allowing to eliminate certain compounds when they accumulate to high levels in the cell. This chain is p-hydroxybenzoic acid efflux pump subunit AaeB, found in Escherichia coli O6:H1 (strain CFT073 / ATCC 700928 / UPEC).